The chain runs to 476 residues: Exodeoxyribonuclease 7 large subunit (476 aa).

It belongs to the XseA family. As to quaternary structure, heterooligomer composed of large and small subunits.

Its subcellular location is the cytoplasm. It catalyses the reaction Exonucleolytic cleavage in either 5'- to 3'- or 3'- to 5'-direction to yield nucleoside 5'-phosphates.. Functionally, bidirectionally degrades single-stranded DNA into large acid-insoluble oligonucleotides, which are then degraded further into small acid-soluble oligonucleotides. This Bartonella bacilliformis (strain ATCC 35685 / KC583 / Herrer 020/F12,63) protein is Exodeoxyribonuclease 7 large subunit.